The sequence spans 73 residues: Translation initiation factor IF-1 (73 aa).

The region spanning 1-73 is the S1-like domain; the sequence is MSEKEAGIEV…SRGRITYRDK (73 aa).

The protein belongs to the IF-1 family. As to quaternary structure, component of the 30S ribosomal translation pre-initiation complex which assembles on the 30S ribosome in the order IF-2 and IF-3, IF-1 and N-formylmethionyl-tRNA(fMet); mRNA recruitment can occur at any time during PIC assembly.

It is found in the cytoplasm. Functionally, one of the essential components for the initiation of protein synthesis. Stabilizes the binding of IF-2 and IF-3 on the 30S subunit to which N-formylmethionyl-tRNA(fMet) subsequently binds. Helps modulate mRNA selection, yielding the 30S pre-initiation complex (PIC). Upon addition of the 50S ribosomal subunit IF-1, IF-2 and IF-3 are released leaving the mature 70S translation initiation complex. This chain is Translation initiation factor IF-1, found in Anaeromyxobacter dehalogenans (strain 2CP-C).